Reading from the N-terminus, the 327-residue chain is 2-methoxy-6-polyprenyl-1,4-benzoquinol methylase, mitochondrial (327 aa).

Residues 1–43 constitute a mitochondrion transit peptide; the sequence is MAAPIRAFVLRVLSDSTRNIHHVLRCRSKYLCRRAAITARRGY. S-adenosyl-L-methionine contacts are provided by residues threonine 117, aspartate 171, and 199 to 200; that span reads DA.

Belongs to the class I-like SAM-binding methyltransferase superfamily. MenG/UbiE family. In terms of assembly, component of a multi-subunit COQ enzyme complex, composed of at least coq3, coq4, coq5, coq6, coq7 and coq9.

The protein localises to the mitochondrion inner membrane. It catalyses the reaction a 2-methoxy-6-(all-trans-polyprenyl)benzene-1,4-diol + S-adenosyl-L-methionine = a 5-methoxy-2-methyl-3-(all-trans-polyprenyl)benzene-1,4-diol + S-adenosyl-L-homocysteine + H(+). It functions in the pathway cofactor biosynthesis; ubiquinone biosynthesis. Functionally, methyltransferase required for the conversion of 2-polyprenyl-6-methoxy-1,4-benzoquinol (DDMQH2) to 2-polyprenyl-3-methyl-6-methoxy-1,4-benzoquinol (DMQH2). This chain is 2-methoxy-6-polyprenyl-1,4-benzoquinol methylase, mitochondrial, found in Danio rerio (Zebrafish).